The following is a 416-amino-acid chain: MTVPFKIPISDLDYCLEQLLDHKPPKILPPETIQQLCHTLKTELLQTPNIISLQSPISVVGDIHGQYHDLLEIFQIGGSPPQTNYLFLGDYVDRGYYSVETISLLLVLKLRYPERVFLIRGNHESRTITTNYGFYTEVLNKYQGSADVWTFITDLFDYLPLGATIDGKIFACHGGLSPSCQQLDQIRAVDRFREIPHDGIMADLVWSDPDVAISDFKLSPRGAGYLFGNDVIDKFCQDNNLVQMIRAHQLCNEGYTSYWKGKCLTVWSAPNYCYRCGNKASVLEILHSNYDSKDPTNGSDGEISSINGEFIGVNTSFESFGDDDDDYNDYRNRFNNSSRLHKQQGVLPGQFFNVFEASKENDEDTLQGKSVNGINFDDELSTSDDTSGSGGNNNKGDFFAAFFQERPKRQQVEYFL.

Mn(2+) is bound by residues Asp-62, His-64, Asp-90, and Asn-122. The active-site Proton donor is the His-123. Positions 173 and 248 each coordinate Mn(2+). Residues Glu-363 to Gly-391 form a disordered region.

It belongs to the PPP phosphatase family. PP-2A subfamily. The cofactor is Mn(2+).

It carries out the reaction O-phospho-L-seryl-[protein] + H2O = L-seryl-[protein] + phosphate. The catalysed reaction is O-phospho-L-threonyl-[protein] + H2O = L-threonyl-[protein] + phosphate. Its activity is regulated as follows. Inhibited by okadaic acid, a specific inhibitor of serine/threonine phosphatases of types 1, 2A and 2B. In terms of biological role, serine/threonine-protein phosphatase that plays an important role in controlling colony morphology, filament extension and agar invasion. Down-regulates expression of NRG1 and affects the expression of multiple filament-specific transcripts in response to serum and 37 degrees Celsius. Plays a crucial role in virulence in a mouse model of systemic candidiasis. This chain is Serine/threonine-protein phosphatase PP2A-like PPG1, found in Candida albicans (strain SC5314 / ATCC MYA-2876) (Yeast).